The following is a 1620-amino-acid chain: DNA (cytosine-5)-methyltransferase 1 (1620 aa).

Residues 1–21 (MPARTAPARVPALASPAGSLP) form a disordered region. Residues 1–120 (MPARTAPARV…SRPTWRAEMA (120 aa)) are interaction with DMAP1. The tract at residues 1-145 (MPARTAPARV…RRSKSDSDTL (145 aa)) is interaction with DNMT3A. 2 interaction with the PRC2/EED-EZH2 complex regions span residues 1–343 (MPAR…SERK) and 305–609 (APET…RVMG). Phosphoserine is present on serine 15. In terms of domain architecture, DMAP1-binding spans 16 to 109 (PAGSLPDHVR…TQKANGCPAN (94 aa)). At lysine 70 the chain carries N6,N6-dimethyllysine; by EHMT2. Positions 96–369 (THTLTQKANG…PECGQHLDDP (274 aa)) are disordered. The segment covering 126 to 137 (PRSRPKPRGPRR) has biased composition (basic residues). Serine 138 is modified (phosphoserine). Position 139 is an N6-methyllysine; by SETD7 (lysine 139). Serine 140 is subject to Phosphoserine. A compositionally biased stretch (polar residues) spans 144-155 (TLSVETSPSSVA). Phosphoserine; by CK1 is present on serine 146. The interval 147–217 (VETSPSSVAT…SGAAAAVEKL (71 aa)) is interaction with DNMT3B. Phosphoserine is present on residues serine 150 and serine 152. Residues 161–172 (RQTTITAHFTKG) form an interaction with PCNA region. Residue threonine 164 is modified to Phosphothreonine. Lysine 171 carries the post-translational modification N6-acetyllysine. Positions 175 to 202 (KRKPKEESEEGNSAESAAEERDQDKKRR) match the Nuclear localization signal motif. Basic and acidic residues predominate over residues 192 to 205 (AEERDQDKKRRVVD). Phosphoserine is present on serine 240. 2 stretches are compositionally biased toward basic and acidic residues: residues 246 to 267 (RELS…PETH) and 286 to 300 (QPRD…KEAE). Position 255 is an N6-acetyllysine; alternate (lysine 255). Lysine 255 participates in a covalent cross-link: Glycyl lysine isopeptide (Lys-Gly) (interchain with G-Cter in SUMO2); alternate. A compositionally biased stretch (acidic residues) spans 308 to 317 (TPEDRDEDER). The segment at 328–556 (KLESHTVPVQ…NVNRFTEDSL (229 aa)) is DNA replication foci-targeting sequence. Residues cysteine 359 and cysteine 362 each contribute to the Zn(2+) site. Lysine 372 is subject to N6-acetyllysine. Zn(2+) contacts are provided by cysteine 420 and histidine 424. Serine 515 and serine 555 each carry phosphoserine. The segment at 649-695 (NAMKRRRCGVCEVCQQPECGKCKACKDMVKFGGTGRSKQACLKRRCP) adopts a CXXC-type zinc-finger fold. The Zn(2+) site is built by cysteine 656, cysteine 659, cysteine 662, cysteine 667, cysteine 670, cysteine 673, cysteine 689, and cysteine 694. The segment at 696–757 (NLAVKEADDD…TYYQKVSIDE (62 aa)) is autoinhibitory linker. Positions 696-813 (NLAVKEADDD…TDTVLGATSD (118 aa)) are interaction with HDAC1. The segment covering 702 to 713 (ADDDEEADDDVS) has biased composition (acidic residues). The tract at residues 702–732 (ADDDEEADDDVSEMPSPKKLHQGKKKKQNKD) is disordered. A phosphoserine mark is found at serine 713 and serine 717. Over residues 719 to 730 (KKLHQGKKKKQN) the composition is skewed to basic residues. At serine 735 the chain carries Phosphoserine. The residue at position 752 (lysine 752) is an N6-acetyllysine. Residues 758–884 (EMLEVGDCVS…QEYARFESPP (127 aa)) enclose the BAH 1 domain. Serine 882 bears the Phosphoserine mark. 4 positions are modified to N6-acetyllysine: lysine 895, lysine 961, lysine 965, and lysine 979. Positions 976 to 1103 (HYRKYSDYIK…SKTKNFEDPP (128 aa)) constitute a BAH 2 domain. Residues 1097-1136 (KNFEDPPNHARSPGNKGKGKGKGKGKGKHQVSEPKEPEAA) are disordered. Repeat copies occupy residues 1112-1113 (KG), 1114-1115 (KG), 1116-1117 (KG), 1118-1119 (KG), 1120-1121 (KG), and 1122-1123 (KG). The 7 X 2 AA tandem repeats of K-G stretch occupies residues 1112 to 1125 (KGKGKGKGKGKGKH). A compositionally biased stretch (basic residues) spans 1113–1125 (GKGKGKGKGKGKH). N6-acetyllysine is present on residues lysine 1114, lysine 1116, lysine 1118, lysine 1120, lysine 1122, and lysine 1124. The stretch at 1124 to 1125 (KH) is one 7; approximate repeat. The interaction with the PRC2/EED-EZH2 complex stretch occupies residues 1124–1620 (KHQVSEPKEP…KAKEEAATKD (497 aa)). Positions 1126 to 1135 (QVSEPKEPEA) are enriched in basic and acidic residues. Residues 1142–1601 (LRTLDVFSGC…LEIKLCLLSS (460 aa)) form the SAM-dependent MTase C5-type domain. Positions 1142 to 1620 (LRTLDVFSGC…KAKEEAATKD (479 aa)) are catalytic. S-adenosyl-L-methionine contacts are provided by residues serine 1149, 1153-1154 (GL), 1171-1172 (EM), and 1193-1194 (DC). Cysteine 1229 is an active-site residue. N6-acetyllysine is present on residues lysine 1352 and lysine 1418. Valine 1582 is an S-adenosyl-L-methionine binding site. Lysine 1611 is covalently cross-linked (Glycyl lysine isopeptide (Lys-Gly) (interchain with G-Cter in SUMO2)).

The protein belongs to the class I-like SAM-binding methyltransferase superfamily. C5-methyltransferase family. As to quaternary structure, homodimer. Forms a stable complex with E2F1, BB1 and HDAC1. Forms a complex with DMAP1 and HDAC2, with direct interaction. Interacts with the PRC2/EED-EZH2 complex. Probably part of a corepressor complex containing ZNF304, TRIM28, SETDB1 and DNMT1. Interacts with UHRF1; promoting its recruitment to hemimethylated DNA. Interacts with USP7, promoting its deubiquitination. Interacts with BAZ2A/TIP5. Interacts with PCNA. Interacts with MBD2 and MBD3. Interacts with DNMT3A and DNMT3B. Interacts with UBC9. Interacts with HDAC1. Interacts with CSNK1D. Interacts with SIRT7. Interacts with ZNF263; recruited to the SIX3 promoter along with other proteins involved in chromatin modification and transcriptional corepression where it contributes to transcriptional repression. Interacts with L3MBTL3 and DCAF5; the interaction requires DNMT1 methylation at Lys-139 and is necessary to target DNMT1 for ubiquitination by the CRL4-DCAF5 E3 ubiquitin ligase complex and proteasomal degradation. Interacts with PHF20L1; the interaction requires DNMT1 methylation at Lys-139 and protects DNMT1 from ubiquitination and proteasomal degradation. Sumoylated; sumoylation increases activity. Post-translationally, phosphorylation at Ser-146 by CK1 reduces DNA-binding activity. In terms of processing, acetylation on multiple lysines, mainly by KAT2B/PCAF, regulates cell cycle G(2)/M transition. Deacetylation of Lys-1352 and Lys-1418 by SIRT1 increases methyltransferase activity. Phosphorylation of Ser-152 by CDKs is important for enzymatic activity and protein stability. Phosphorylation of Ser-140 by AKT1 prevents methylation by SETD7 thereby increasing DNMT1 stability. Post-translationally, methylation at Lys-139 by SETD7 is necessary for the regulation of DNMT1 proteasomal degradation. In terms of processing, ubiquitinated by UHRF1; interaction with USP7 counteracts ubiquitination by UHRF1 by promoting deubiquitination and preventing degradation by the proteasome. In terms of tissue distribution, isoform 1 is expressed in embryonic stem cells and in somatic tissues. Isoform 2 is expressed in oocytes, preimplantation embryos, testis and in skeletal muscle during myogenesis.

Its subcellular location is the nucleus. It is found in the cytoplasm. The enzyme catalyses a 2'-deoxycytidine in DNA + S-adenosyl-L-methionine = a 5-methyl-2'-deoxycytidine in DNA + S-adenosyl-L-homocysteine + H(+). Its activity is regulated as follows. Allosterically regulated. The binding of 5-methylcytosine-containing DNA to the N-terminal parts of DNMT1 causes an allosteric activation of the catalytic domain by a direct interaction of its Zn-binding domain with the catalytic domain. Methylates CpG residues. Preferentially methylates hemimethylated DNA. Associates with DNA replication sites in S phase maintaining the methylation pattern in the newly synthesized strand, that is essential for epigenetic inheritance. Associates with chromatin during G2 and M phases to maintain DNA methylation independently of replication. It is responsible for maintaining methylation patterns established in development. DNA methylation is coordinated with methylation of histones. Mediates transcriptional repression by direct binding to HDAC2. In association with DNMT3B and via the recruitment of CTCFL/BORIS, involved in activation of BAG1 gene expression by modulating dimethylation of promoter histone H3 at H3K4 and H3K9. Probably forms a corepressor complex required for activated KRAS-mediated promoter hypermethylation and transcriptional silencing of tumor suppressor genes (TSGs) or other tumor-related genes in colorectal cancer (CRC) cells. Also required to maintain a transcriptionally repressive state of genes in undifferentiated embryonic stem cells (ESCs). Associates at promoter regions of tumor suppressor genes (TSGs) leading to their gene silencing. Promotes tumor growth. The polypeptide is DNA (cytosine-5)-methyltransferase 1 (Dnmt1) (Mus musculus (Mouse)).